The chain runs to 561 residues: Arginine--tRNA ligase (561 aa).

Positions 128–138 (ANPTGPLHVGH) match the 'HIGH' region motif.

This sequence belongs to the class-I aminoacyl-tRNA synthetase family. Monomer.

It is found in the cytoplasm. The enzyme catalyses tRNA(Arg) + L-arginine + ATP = L-arginyl-tRNA(Arg) + AMP + diphosphate. The polypeptide is Arginine--tRNA ligase (Methylibium petroleiphilum (strain ATCC BAA-1232 / LMG 22953 / PM1)).